The sequence spans 431 residues: Acyl transferase 8 (431 aa).

His-169 serves as the catalytic Proton acceptor. Disordered stretches follow at residues 220–247 (VADA…RAPA), 260–313 (HHAG…DHLR), and 331–400 (GLRV…PPPT). A compositionally biased stretch (low complexity) spans 224–234 (RGGVRPGVPRP). Positions 264-273 (DGGGGGGGGR) are enriched in gly residues. Basic residues-rich tracts occupy residues 297-306 (ERRRRRRRGR) and 335-380 (GRPR…RRLP). Residues 381–394 (QRHDAPRLITERAH) are compositionally biased toward basic and acidic residues.

It belongs to the plant acyltransferase family.

In terms of biological role, involved in the incorporation of ferulate into the cell wall. May act as arabinoxylan feruloyl transferase. The protein is Acyl transferase 8 of Oryza sativa subsp. japonica (Rice).